Here is a 219-residue protein sequence, read N- to C-terminus: UPF0502 protein Gura_0277 (219 aa).

It belongs to the UPF0502 family.

This chain is UPF0502 protein Gura_0277, found in Geotalea uraniireducens (strain Rf4) (Geobacter uraniireducens).